The sequence spans 854 residues: MKTEFGFSNLVGTIFSKGNLVFTPDGFSILSPVGNRVSVYNLKDNTSYTFPFENHKNISHIALSPTSTLLLSVDEEGRCILCNFLRRSVLHYFNFKSPVGAIEFSPNGKFFAVSLGKLIQVWRTPNSLEEREFAPFVLHREYTGHFDDIVSISWSADSRFFISTSKDLTARLHSVDPIEGFHPCALTGHKNTVVSGFFSKDQQTIYTVSKDGALFVWKYSPLFQAGEVIDEEAEENKTRTHIWLIKERHYFNQNSKLRCAAFHPTSNLLVVGFSSGLFGIYELPSFTMLYQLSITQSNIDTLTVNSTGDWIAIGSSKLGQLLVWEWQSESYVLKQQSHYDALSTLQYSSDGQRIITGADDGKIKVWDMNSGFCIVTFTQHTSAVSGLCFSKRGNVLFSSSLDGSVRAWDLIRYRNFRTFTAPSRVQFSCIAVDPSGEIVCAGSQDSFEIFMWSVQTGQLLETLAGHEGPVSSLSFNSSGSLLASGSWDKTVRIWDIFSRSGIVEPLPIPSDVLSLAFHPDGKEVCVASLDGQLTFWNVQEGKQTSLIDGRKDLSGGRRFDDARTAENSSLNKTFTSICYSADGSCVLSAGTSKYVCLYDIITGVLIKKFQLSKNESLQGVQEMLNSRKMTEAGSIELIDTQGEESDLEDRIDRTLPGARRGDLSARKTRPEIICHGVQFSPSGGAFAAATTEGLMIYSLYNDFLFDPINLDMDITPSTTLTMCAEGEFLISLVMALRLNEYKVVQKVYESIPITDVEHVVQELPVSYLANFMGYLSSFAAETPHIEFHLRWMKSVLTYHGEYLRRKNFEFASQLTSLQKSIVVLSKRLSQLSSNNEFQLSFLLDKMHLRLENTA.

WD repeat units lie at residues 9 to 52 (NLVG…TFPF), 53 to 93 (ENHK…LHYF), 94 to 132 (NFKSPVGAIEFSPNGKFFAVSLGKLIQVWRTPNSLEERE), 144 to 183 (GHFDDIVSISWSADSRFFISTSKDLTARLHSVDPIEGFHP), 188 to 227 (GHKNTVVSGFFSKDQQTIYTVSKDGALFVWKYSPLFQAGE), 252 to 291 (NQNSKLRCAAFHPTSNLLVVGFSSGLFGIYELPSFTMLYQ), 294 to 334 (ITQS…YVLK), 337 to 376 (SHYDALSTLQYSSDGQRIITGADDGKIKVWDMNSGFCIVT), 379 to 418 (QHTSAVSGLCFSKRGNVLFSSSLDGSVRAWDLIRYRNFRT), 422 to 464 (PSRV…ETLA), 465 to 504 (GHEGPVSSLSFNSSGSLLASGSWDKTVRIWDIFSRSGIVE), 507 to 546 (PIPSDVLSLAFHPDGKEVCVASLDGQLTFWNVQEGKQTSL), and 569 to 608 (SLNKTFTSICYSADGSCVLSAGTSKYVCLYDIITGVLIKK). At T640 the chain carries Phosphothreonine. The residue at position 645 (S645) is a Phosphoserine. The WD 14 repeat unit spans residues 668–709 (TRPEIICHGVQFSPSGGAFAAATTEGLMIYSLYNDFLFDPIN).

The protein belongs to the WD repeat PWP2 family.

The protein is Periodic tryptophan protein 2 homolog of Schizosaccharomyces pombe (strain 972 / ATCC 24843) (Fission yeast).